We begin with the raw amino-acid sequence, 297 residues long: 4-hydroxy-tetrahydrodipicolinate synthase (297 aa).

Pyruvate is bound at residue threonine 47. Catalysis depends on tyrosine 135, which acts as the Proton donor/acceptor. Catalysis depends on lysine 163, which acts as the Schiff-base intermediate with substrate. Residue isoleucine 205 participates in pyruvate binding.

This sequence belongs to the DapA family. As to quaternary structure, homotetramer; dimer of dimers.

The protein resides in the cytoplasm. It carries out the reaction L-aspartate 4-semialdehyde + pyruvate = (2S,4S)-4-hydroxy-2,3,4,5-tetrahydrodipicolinate + H2O + H(+). The protein operates within amino-acid biosynthesis; L-lysine biosynthesis via DAP pathway; (S)-tetrahydrodipicolinate from L-aspartate: step 3/4. In terms of biological role, catalyzes the condensation of (S)-aspartate-beta-semialdehyde [(S)-ASA] and pyruvate to 4-hydroxy-tetrahydrodipicolinate (HTPA). The protein is 4-hydroxy-tetrahydrodipicolinate synthase of Dehalococcoides mccartyi (strain CBDB1).